The chain runs to 208 residues: Cell death-inducing p53-target protein 1 (208 aa).

2 stretches are compositionally biased toward pro residues: residues 1-13 (MSSE…PGGP) and 36-67 (MQPP…PGFI). A disordered region spans residues 1–71 (MSSEPPPPYP…PQPGFIPPHM (71 aa)). In terms of domain architecture, LITAF spans 122–206 (ATTVTVLQGE…CKAYIYTYKR (85 aa)). Residues Cys-142 and Cys-145 each contribute to the Zn(2+) site. The membrane-binding amphipathic helix stretch occupies residues 164–184 (LGFFCCFMGCDLGCCLIPCLI). Zn(2+) contacts are provided by Cys-194 and Cys-197.

Belongs to the CDIP1/LITAF family. As to expression, highly expressed in brain. Expressed at lower level in heart, skeletal muscle, kidney, pancreas and liver. Weakly or not expressed in placenta and lung.

The protein resides in the late endosome membrane. Its subcellular location is the lysosome membrane. Its function is as follows. Acts as an important p53/TP53-apoptotic effector. Regulates TNF-alpha-mediated apoptosis in a p53/TP53-dependent manner. This Homo sapiens (Human) protein is Cell death-inducing p53-target protein 1 (CDIP1).